Consider the following 223-residue polypeptide: Nicotinamide/nicotinic acid mononucleotide adenylyltransferase 2 (223 aa).

NAD(+) is bound by residues Ser-11 and Phe-12. Position 19 (His-19) interacts with ATP. NAD(+) is bound by residues Trp-87, Thr-90, Gly-116, Asp-118, Leu-133, Trp-134, and Arg-153. Residue 190–191 (TR) coordinates ATP.

Belongs to the eukaryotic NMN adenylyltransferase family. It depends on a divalent metal cation as a cofactor.

It catalyses the reaction beta-nicotinamide D-ribonucleotide + ATP + H(+) = diphosphate + NAD(+). The catalysed reaction is nicotinate beta-D-ribonucleotide + ATP + H(+) = deamido-NAD(+) + diphosphate. Its pathway is cofactor biosynthesis; NAD(+) biosynthesis; deamido-NAD(+) from nicotinate D-ribonucleotide: step 1/1. It functions in the pathway cofactor biosynthesis; NAD(+) biosynthesis; NAD(+) from nicotinamide D-ribonucleotide: step 1/1. Catalyzes the formation of NAD(+) from nicotinamide mononucleotide (NMN) and ATP. Can also use the deamidated form; nicotinic acid mononucleotide (NaMN) as substrate. The protein is Nicotinamide/nicotinic acid mononucleotide adenylyltransferase 2 of Caenorhabditis elegans.